The primary structure comprises 107 residues: uncharacterized protein (107 aa).

4 helical membrane passes run 9–28 (FLVF…LIME), 33–50 (SYII…SLNI), 55–72 (LAIA…AIHV), and 77–99 (YRVI…YLKG).

The protein localises to the cell membrane. This is an uncharacterized protein from Archaeoglobus fulgidus (strain ATCC 49558 / DSM 4304 / JCM 9628 / NBRC 100126 / VC-16).